The sequence spans 212 residues: MTTETFVKDIKPGLKNLNLIFIVLETGRVTKTKDGHEVRTCKVADKTGSINISVWDDVGNLIQPGDIIRLTKGYASVFKGCLTLYTGRGGDLQKIGEFCMVYSEVPNFSEPNPEYNTQQAPNKSVQNNDNSPTAPQATTGPPAASPASENQNGNGLSTQLGPVGGPHPSHTPSHPPSTRITRSQPNHTPSGPPGPSSNPVSNGKETRRSSKR.

The OB DNA-binding region spans Ile22 to Leu92. Residues Glu110 to Arg212 form a disordered region. The segment covering Glu114 to Asn130 has biased composition (polar residues). A Phosphothreonine; by ATM modification is found at Thr117. The span at Ser131–Ser148 shows a compositional bias: low complexity. Residues Glu149–Leu160 show a composition bias toward polar residues. A compositionally biased stretch (low complexity) spans Pro166–Thr178.

Belongs to the SOSS-B family. SOSS-B1 subfamily. Component of the SOSS complex, composed of SOSS-B (SOSS-B1/NABP2 or SOSS-B2/NABP1), SOSS-A/INTS3 and SOSS-C/INIP. SOSS complexes containing SOSS-B1/NABP2 are more abundant than complexes containing SOSS-B2/NABP1. Directly interacts with ATM, SOSS-A/INTS3 and RAD51. Interacts with INTS7. In terms of processing, phosphorylated by ATM in response to DNA damage. Phosphorylation prevents degradation by the proteasome, hence stabilization of the protein and accumulation within cells. Ubiquitinated in a FBXL5-dependent manner, leading to proteasomal degradation.

It is found in the nucleus. Its function is as follows. Component of the SOSS complex, a multiprotein complex that functions downstream of the MRN complex to promote DNA repair and G2/M checkpoint. In the SOSS complex, acts as a sensor of single-stranded DNA that binds to single-stranded DNA, in particular to polypyrimidines. The SOSS complex associates with DNA lesions and influences diverse endpoints in the cellular DNA damage response including cell-cycle checkpoint activation, recombinational repair and maintenance of genomic stability. Required for efficient homologous recombination-dependent repair of double-strand breaks (DSBs) and ATM-dependent signaling pathways. The sequence is that of SOSS complex subunit B1 (Nabp2) from Mus musculus (Mouse).